The primary structure comprises 762 residues: Dolichyl-phosphate-mannose--protein mannosyltransferase 4 (762 aa).

Over residues 1 to 10 (MSVPKKRNHG) the composition is skewed to basic residues. The segment at 1 to 24 (MSVPKKRNHGKLPPSTKDVDDPSL) is disordered. At 1 to 53 (MSVPKKRNHGKLPPSTKDVDDPSLKYTKAAPKCEQVAEHWLLQPLPEPESRYS) the chain is on the lumenal side. A helical membrane pass occupies residues 54–74 (FWVTIVTLLAFAARFYKIWYP). Residues 75-136 (KEVVFDEVHF…IGYSYETHPA (62 aa)) lie on the Cytoplasmic side of the membrane. A helical transmembrane segment spans residues 137–157 (PYIAYRSFNAILGTLTVPIMF). At 158–166 (NTLKELNFR) the chain is on the lumenal side. Residues 167–187 (AITCAFASLLVAIDTAHVTET) form a helical membrane-spanning segment. Residues 188–189 (RL) are Cytoplasmic-facing. Residues 190 to 210 (ILLDAILIISIAATMYCYVRF) traverse the membrane as a helical segment. Topologically, residues 211–217 (YKCQLRQ) are lumenal. The helical transmembrane segment at 218–238 (PFTWSWYIWLHATGLSLSFVI) threads the bilayer. Residues 239–242 (STKY) lie on the Cytoplasmic side of the membrane. Residues 243–263 (VGVMTYSAIGFAAVVNLWQLL) form a helical membrane-spanning segment. Residues 264-283 (DIKAGLSLRQFMRHFSKRLN) are Lumenal-facing. Residues 284–304 (GLVLIPFVIYLFWFWVHFTVL) traverse the membrane as a helical segment. The Cytoplasmic segment spans residues 305–593 (NTSGPGDAFM…NGDEKKQIYF (289 aa)). MIR domains follow at residues 331–391 (SKTV…VLPP), 399–458 (GQAV…FQPL), and 464–521 (GHVL…VDEI). The helical transmembrane segment at 594–614 (IGNIIGWWFQVISLAVFVGII) threads the bilayer. The Lumenal portion of the chain corresponds to 615–635 (VADLITRHRGYYALNKMTREK). Residues 636 to 656 (LYGPLMFFFVSWCCHYFPFFL) form a helical membrane-spanning segment. Residues 657-716 (MARQKFLHHYLPAHLIACLFSGALWEVIFSDCKSLDLEKDEDISGASYERNPKVYVKPYT) are Cytoplasmic-facing. The helical transmembrane segment at 717–737 (VFLVCVSCAVAWFFVYFSPLV) threads the bilayer. At 738 to 762 (YGDVSLSPSEVVSREWFDIELNFSK) the chain is on the lumenal side. Asparagine 759 is a glycosylation site (N-linked (GlcNAc...) asparagine).

This sequence belongs to the glycosyltransferase 39 family. In terms of assembly, forms a functional homodimer and may form a heterodimer with PMT6. Interacts with RCR1.

The protein localises to the endoplasmic reticulum membrane. The enzyme catalyses a di-trans,poly-cis-dolichyl beta-D-mannosyl phosphate + L-seryl-[protein] = 3-O-(alpha-D-mannosyl)-L-seryl-[protein] + a di-trans,poly-cis-dolichyl phosphate + H(+). It carries out the reaction a di-trans,poly-cis-dolichyl beta-D-mannosyl phosphate + L-threonyl-[protein] = 3-O-(alpha-D-mannosyl)-L-threonyl-[protein] + a di-trans,poly-cis-dolichyl phosphate + H(+). It functions in the pathway protein modification; protein glycosylation. Functionally, protein O-mannosyltransferase involved in O-glycosylation which is essential for cell wall rigidity. Forms a homodimeric complex to transfer mannose from Dol-P-mannose to Ser or Thr residues on proteins. Specifically acts on secretory proteins with an ER-luminally oriented Ser/Thr-rich region flanked by a membrane anchor such as FUS1, AXL2, GAS1, KEX2, MID2, WSC1, WSC2, OPY2, PRM5, RAX2, or YNL176. This Saccharomyces cerevisiae (strain ATCC 204508 / S288c) (Baker's yeast) protein is Dolichyl-phosphate-mannose--protein mannosyltransferase 4.